Consider the following 556-residue polypeptide: 3-phosphoinositide-dependent protein kinase 1 (556 aa).

Phosphotyrosine; by SRC and INSR is present on Tyr-9. The residue at position 25 (Ser-25) is a Phosphoserine. Residues 26-80 form a disordered region; sequence PSMVRTQTESSTPPGIPGGSRQGPAMDGTAAEPRPGAGSLQHAQPPPQPRKKRPE. The span at 28 to 38 shows a compositional bias: polar residues; it reads MVRTQTESSTP. In terms of domain architecture, Protein kinase spans 82 to 342; it reads FKFGKILGEG…YGPLKAHPFF (261 aa). ATP contacts are provided by residues 92–94 and Lys-111; that span reads SFS. The interval 113 to 157 is PIF-pocket; sequence LEKRHIIKENKVPYVTRERDVMSRLDHPFFVKLYFTFQDDEKLYF. ATP is bound by residues 160 to 162 and Glu-166; that span reads SYA. The active-site Proton acceptor is Asp-205. Glu-209 and Asp-223 together coordinate ATP. Ser-241 is modified (phosphoserine; by autocatalysis). Lys-304 is subject to N6-acetyllysine. The residue at position 354 (Thr-354) is a Phosphothreonine; by MELK. 2 positions are modified to phosphotyrosine; by SRC and INSR: Tyr-373 and Tyr-376. Residue Ser-393 is modified to Phosphoserine. Residue Ser-394 is modified to Phosphoserine; by MAP3K5. Ser-396 carries the phosphoserine modification. At Ser-398 the chain carries Phosphoserine; by MAP3K5. Position 410 is a phosphoserine (Ser-410). Residues 459 to 550 form the PH domain; the sequence is KMGPVDKRKG…EVWRQRYQSH (92 aa). The residue at position 501 (Ser-501) is a Phosphoserine; by PKC/PRKCQ. Thr-513 carries the phosphothreonine; by autocatalysis modification. The residue at position 529 (Ser-529) is a Phosphoserine; by PKC/PRKCQ.

The protein belongs to the protein kinase superfamily. AGC Ser/Thr protein kinase family. PDPK1 subfamily. In terms of assembly, homodimer in its autoinhibited state. Active as monomer. Interacts with NPRL2, PPARG, PAK1, PTK2B, GRB14, PKN1 (via C-terminus), STRAP and IKKB. The Tyr-9 phosphorylated form interacts with SRC, RASA1 and CRK (via their SH2 domains). Interacts with SGK3 in a phosphorylation-dependent manner. The tyrosine-phosphorylated form interacts with PTPN6. The Ser-241 phosphorylated form interacts with YWHAH and YWHAQ. Binds INSR in response to insulin. Interacts (via PH domain) with SMAD3, SMAD4 and SMAD7. Interacts with PKN2; the interaction stimulates PDPK1 autophosphorylation, its PI(3,4,5)P3-dependent kinase activity toward 'Ser-473' of AKT1 but also activates its kinase activity toward PRKCD and PRKCZ. In terms of processing, phosphorylation on Ser-241 in the activation loop is required for full activity. PDPK1 itself can autophosphorylate Ser-241, leading to its own activation. Autophosphorylation is inhibited by the apoptotic C-terminus cleavage product of PKN2. Tyr-9 phosphorylation is critical for stabilization of both PDPK1 and the PDPK1/SRC complex via HSP90-mediated protection of PDPK1 degradation. Angiotensin II stimulates the tyrosine phosphorylation of PDPK1 in vascular smooth muscle in a calcium- and SRC-dependent manner. Phosphorylated on Tyr-9, Tyr-373 and Tyr-376 by INSR in response to insulin. Palmitate negatively regulates autophosphorylation at Ser-241 and palmitate-induced phosphorylation at Ser-529 and Ser-501 by PKC/PRKCQ negatively regulates its ability to phosphorylate PKB/AKT1. Phosphorylation at Thr-354 by MELK partially inhibits kinase activity, the inhibition is cooperatively enhanced by phosphorylation at Ser-394 and Ser-398 by MAP3K5. Post-translationally, autophosphorylated; autophosphorylation is inhibited by the apoptotic C-terminus cleavage product of PKN2. Monoubiquitinated in the kinase domain, deubiquitinated by USP4. As to expression, appears to be expressed ubiquitously. The Tyr-9 phosphorylated form is markedly increased in diseased tissue compared with normal tissue from lung, liver, colon and breast.

It is found in the cytoplasm. The protein resides in the nucleus. It localises to the cell membrane. The protein localises to the cell junction. Its subcellular location is the focal adhesion. It carries out the reaction L-seryl-[protein] + ATP = O-phospho-L-seryl-[protein] + ADP + H(+). The enzyme catalyses L-threonyl-[protein] + ATP = O-phospho-L-threonyl-[protein] + ADP + H(+). With respect to regulation, homodimerization regulates its activity by maintaining the kinase in an autoinhibitory conformation. NPRL2 down-regulates its activity by interfering with tyrosine phosphorylation at the Tyr-9, Tyr-373 and Tyr-376 residues. The 14-3-3 protein YWHAQ acts as a negative regulator by association with the residues surrounding the Ser-241 residue. STRAP positively regulates its activity by enhancing its autophosphorylation and by stimulating its dissociation from YWHAQ. SMAD2, SMAD3, SMAD4 and SMAD7 also positively regulate its activity by stimulating its dissociation from YWHAQ. Activated by phosphorylation on Tyr-9, Tyr-373 and Tyr-376 by INSR in response to insulin. Its function is as follows. Serine/threonine kinase which acts as a master kinase, phosphorylating and activating a subgroup of the AGC family of protein kinases. Its targets include: protein kinase B (PKB/AKT1, PKB/AKT2, PKB/AKT3), p70 ribosomal protein S6 kinase (RPS6KB1), p90 ribosomal protein S6 kinase (RPS6KA1, RPS6KA2 and RPS6KA3), cyclic AMP-dependent protein kinase (PRKACA), protein kinase C (PRKCD and PRKCZ), serum and glucocorticoid-inducible kinase (SGK1, SGK2 and SGK3), p21-activated kinase-1 (PAK1), TSSK3, protein kinase PKN (PKN1 and PKN2). Plays a central role in the transduction of signals from insulin by providing the activating phosphorylation to PKB/AKT1, thus propagating the signal to downstream targets controlling cell proliferation and survival, as well as glucose and amino acid uptake and storage. Negatively regulates the TGF-beta-induced signaling by: modulating the association of SMAD3 and SMAD7 with TGF-beta receptor, phosphorylating SMAD2, SMAD3, SMAD4 and SMAD7, preventing the nuclear translocation of SMAD3 and SMAD4 and the translocation of SMAD7 from the nucleus to the cytoplasm in response to TGF-beta. Activates PPARG transcriptional activity and promotes adipocyte differentiation. Activates the NF-kappa-B pathway via phosphorylation of IKKB. The tyrosine phosphorylated form is crucial for the regulation of focal adhesions by angiotensin II. Controls proliferation, survival, and growth of developing pancreatic cells. Participates in the regulation of Ca(2+) entry and Ca(2+)-activated K(+) channels of mast cells. Essential for the motility of vascular endothelial cells (ECs) and is involved in the regulation of their chemotaxis. Plays a critical role in cardiac homeostasis by serving as a dual effector for cell survival and beta-adrenergic response. Plays an important role during thymocyte development by regulating the expression of key nutrient receptors on the surface of pre-T cells and mediating Notch-induced cell growth and proliferative responses. Provides negative feedback inhibition to toll-like receptor-mediated NF-kappa-B activation in macrophages. Catalytically inactive. This chain is 3-phosphoinositide-dependent protein kinase 1 (PDPK1), found in Homo sapiens (Human).